A 283-amino-acid chain; its full sequence is Adenylate dimethylallyltransferase (283 aa).

Belongs to the isopentenyl transferase family.

It carries out the reaction dimethylallyl diphosphate + AMP = N(6)-(dimethylallyl)adenosine 5'-phosphate + diphosphate. In terms of biological role, transfers dimethylallyl groups to AMP as part of the biosynthesis of cytokinin phytohormones like isopentenyl adenine or discadenine which controle spore formation and viability. In Dictyostelium discoideum (Social amoeba), this protein is Adenylate dimethylallyltransferase (iptA).